A 76-amino-acid chain; its full sequence is ATP synthase subunit c (76 aa).

2 helical membrane passes run 13–33 (LSVI…GILF) and 55–75 (FIGL…ALII).

This sequence belongs to the ATPase C chain family. F-type ATPases have 2 components, F(1) - the catalytic core - and F(0) - the membrane proton channel. F(1) has five subunits: alpha(3), beta(3), gamma(1), delta(1), epsilon(1). F(0) has three main subunits: a(1), b(2) and c(10-14). The alpha and beta chains form an alternating ring which encloses part of the gamma chain. F(1) is attached to F(0) by a central stalk formed by the gamma and epsilon chains, while a peripheral stalk is formed by the delta and b chains.

The protein localises to the cell membrane. In terms of biological role, f(1)F(0) ATP synthase produces ATP from ADP in the presence of a proton or sodium gradient. F-type ATPases consist of two structural domains, F(1) containing the extramembraneous catalytic core and F(0) containing the membrane proton channel, linked together by a central stalk and a peripheral stalk. During catalysis, ATP synthesis in the catalytic domain of F(1) is coupled via a rotary mechanism of the central stalk subunits to proton translocation. Its function is as follows. Key component of the F(0) channel; it plays a direct role in translocation across the membrane. A homomeric c-ring of between 10-14 subunits forms the central stalk rotor element with the F(1) delta and epsilon subunits. The sequence is that of ATP synthase subunit c from Bifidobacterium longum subsp. infantis (strain ATCC 15697 / DSM 20088 / JCM 1222 / NCTC 11817 / S12).